The primary structure comprises 254 residues: Photosystem II 22 kDa protein 2, chloroplastic (254 aa).

Residues 1-38 (MALQQSMAMPMMVVSDLGTAPRSSPMVQLQRMKKHLVV) constitute a chloroplast transit peptide. 2 consecutive repeat copies span residues 42–148 (FKSR…FVDD) and 149–253 (ATGL…DNDD). 4 helical membrane passes run 86–106 (VAMLGFAASLLGEAVTGKGIL), 120–140 (AEPLLLFFILFTLLGAIGALG), 184–204 (LFVGRLAQLGIAFSLIGEIIT), and 219–239 (PINEIEPLLLFNILFFFFAAI).

Belongs to the ELIP/psbS family.

It is found in the plastid. The protein localises to the chloroplast thylakoid membrane. Functionally, involved in high light-mediated energy-dependent nonphotochemical quenching (NPQ, qE) and thermal dissipation (TD) thus regulating energy conversion in photosystem II and protecting from photoinhibition. Also seems to regulate quantum yield of electron transport in fluctuating light conditions. This Oryza sativa subsp. japonica (Rice) protein is Photosystem II 22 kDa protein 2, chloroplastic.